The following is a 513-amino-acid chain: ATP synthase subunit alpha (513 aa).

ATP is bound at residue 169–176 (GDRQTGKS).

Belongs to the ATPase alpha/beta chains family. F-type ATPases have 2 components, CF(1) - the catalytic core - and CF(0) - the membrane proton channel. CF(1) has five subunits: alpha(3), beta(3), gamma(1), delta(1), epsilon(1). CF(0) has three main subunits: a(1), b(2) and c(9-12). The alpha and beta chains form an alternating ring which encloses part of the gamma chain. CF(1) is attached to CF(0) by a central stalk formed by the gamma and epsilon chains, while a peripheral stalk is formed by the delta and b chains.

It localises to the cell membrane. It catalyses the reaction ATP + H2O + 4 H(+)(in) = ADP + phosphate + 5 H(+)(out). Its function is as follows. Produces ATP from ADP in the presence of a proton gradient across the membrane. The alpha chain is a regulatory subunit. This Baumannia cicadellinicola subsp. Homalodisca coagulata protein is ATP synthase subunit alpha.